Reading from the N-terminus, the 644-residue chain is ATP-dependent zinc metalloprotease FtsH (644 aa).

The Cytoplasmic portion of the chain corresponds to 1-4 (MAKN). A helical membrane pass occupies residues 5–25 (LILWLVIAVVLMSVFQSFGPS). Residues 26-98 (ESNGRKVDYS…VGEPPEEPSL (73 aa)) lie on the Periplasmic side of the membrane. Residues 99–119 (LASIFISWFPMLLLIGVWIFF) form a helical membrane-spanning segment. Residues 120 to 644 (MRQMQGGGGK…NTMSEQLGDK (525 aa)) are Cytoplasmic-facing. 192 to 199 (GPPGTGKT) lines the ATP pocket. A Zn(2+)-binding site is contributed by His414. Glu415 is a catalytic residue. Residues His418 and Asp492 each coordinate Zn(2+). A disordered region spans residues 599-644 (RPPAGWEDPNGTNNSDSNGTPQAPRPVDEPRTPNPGNTMSEQLGDK). Polar residues-rich tracts occupy residues 608–619 (NGTNNSDSNGTP) and 632–644 (NPGN…LGDK).

The protein in the central section; belongs to the AAA ATPase family. It in the C-terminal section; belongs to the peptidase M41 family. As to quaternary structure, homohexamer. Zn(2+) is required as a cofactor.

It localises to the cell inner membrane. In terms of biological role, acts as a processive, ATP-dependent zinc metallopeptidase for both cytoplasmic and membrane proteins. Plays a role in the quality control of integral membrane proteins. This Salmonella typhi protein is ATP-dependent zinc metalloprotease FtsH.